We begin with the raw amino-acid sequence, 104 residues long: Large ribosomal subunit protein uL24 (104 aa).

This sequence belongs to the universal ribosomal protein uL24 family. In terms of assembly, part of the 50S ribosomal subunit.

Its function is as follows. One of two assembly initiator proteins, it binds directly to the 5'-end of the 23S rRNA, where it nucleates assembly of the 50S subunit. One of the proteins that surrounds the polypeptide exit tunnel on the outside of the subunit. This chain is Large ribosomal subunit protein uL24, found in Methylorubrum extorquens (strain PA1) (Methylobacterium extorquens).